The sequence spans 82 residues: Penaeidin-3i (82 aa).

An N-terminal signal peptide occupies residues 1–19 (MRLVVCLVFLASFALVCQG). A Pyrrolidone carboxylic acid modification is found at Gln-20. 2 disulfide bridges follow: Cys-55-Cys-73 and Cys-67-Cys-74. Serine amide is present on Ser-81.

It belongs to the penaeidin family.

It is found in the cytoplasmic granule. Antibacterial and antifungal activity. Presents chitin-binding activity. The polypeptide is Penaeidin-3i (Penaeus vannamei (Whiteleg shrimp)).